The chain runs to 523 residues: 2-isopropylmalate synthase (523 aa).

The region spanning 5-267 (VIIFDTTLRD…HTRINHQEIW (263 aa)) is the Pyruvate carboxyltransferase domain. Residues aspartate 14, histidine 202, histidine 204, and asparagine 238 each contribute to the Mn(2+) site. The interval 392-523 (RLEYFSVQSG…QNKEHNQETV (132 aa)) is regulatory domain.

Belongs to the alpha-IPM synthase/homocitrate synthase family. LeuA type 1 subfamily. Homodimer. Mn(2+) is required as a cofactor.

Its subcellular location is the cytoplasm. The enzyme catalyses 3-methyl-2-oxobutanoate + acetyl-CoA + H2O = (2S)-2-isopropylmalate + CoA + H(+). The protein operates within amino-acid biosynthesis; L-leucine biosynthesis; L-leucine from 3-methyl-2-oxobutanoate: step 1/4. Catalyzes the condensation of the acetyl group of acetyl-CoA with 3-methyl-2-oxobutanoate (2-ketoisovalerate) to form 3-carboxy-3-hydroxy-4-methylpentanoate (2-isopropylmalate). The polypeptide is 2-isopropylmalate synthase (Cronobacter sakazakii (strain ATCC BAA-894) (Enterobacter sakazakii)).